Here is a 506-residue protein sequence, read N- to C-terminus: 2-isopropylmalate synthase (506 aa).

The Pyruvate carboxyltransferase domain occupies 8 to 272; that stretch reads LIVFDTTLRD…ETGIQLKEIL (265 aa). Residues Asp17, His206, His208, and Asn242 each contribute to the Mn(2+) site. The segment at 396–506 is regulatory domain; it reads ELEYVAVTVC…YLNAVNKALL (111 aa).

It belongs to the alpha-IPM synthase/homocitrate synthase family. LeuA type 1 subfamily. As to quaternary structure, homodimer. It depends on Mn(2+) as a cofactor.

The protein resides in the cytoplasm. It catalyses the reaction 3-methyl-2-oxobutanoate + acetyl-CoA + H2O = (2S)-2-isopropylmalate + CoA + H(+). Its pathway is amino-acid biosynthesis; L-leucine biosynthesis; L-leucine from 3-methyl-2-oxobutanoate: step 1/4. Functionally, catalyzes the condensation of the acetyl group of acetyl-CoA with 3-methyl-2-oxobutanoate (2-ketoisovalerate) to form 3-carboxy-3-hydroxy-4-methylpentanoate (2-isopropylmalate). This Methylacidiphilum infernorum (isolate V4) (Methylokorus infernorum (strain V4)) protein is 2-isopropylmalate synthase.